We begin with the raw amino-acid sequence, 513 residues long: Maturase K (513 aa).

Belongs to the intron maturase 2 family. MatK subfamily.

The protein localises to the plastid. Its subcellular location is the chloroplast. Its function is as follows. Usually encoded in the trnK tRNA gene intron. Probably assists in splicing its own and other chloroplast group II introns. The chain is Maturase K from Zea mays (Maize).